Consider the following 110-residue polypeptide: Transmembrane protein 233 (110 aa).

The tract at residues 1–32 (MSQYASRSDSKGALDSSSPEAYTEDDKTEEDI) is disordered. Topologically, residues 1 to 42 (MSQYASRSDSKGALDSSSPEAYTEDDKTEEDIPAPSNYLWLT) are cytoplasmic. A compositionally biased stretch (acidic residues) spans 22-32 (YTEDDKTEEDI). The segment at residues 43 to 63 (IISCFCPAYPVNIVALVFSIM) is an intramembrane region (helical). The Cytoplasmic segment spans residues 64–85 (SLNSYNDGDYEGARRLGRNAKW). The chain crosses the membrane as a helical span at residues 86 to 106 (VAIASIIIGLVIIGVSCAVHF). At 107-110 (SRNP) the chain is on the extracellular side.

It belongs to the CD225/Dispanin family. As to quaternary structure, interacts with the giant stinging tree toxin ExTxA (P0DQP3). Interacts with Nav1.7/SCN9A. Interacts with Nav1.1/SCN1A, Nav1.2/SCN2A, Nav1.3/SCN3A, Nav1.4/SCN4A, Nav1.5/SCN5A, and Nav1.6/SCN8A. Probably expressed in nociceptive neurons. Detected in dorsal root ganglion neurons.

The protein resides in the membrane. Probable accessory protein of voltage-gated sodium channels. This is Transmembrane protein 233 from Mus musculus (Mouse).